The primary structure comprises 89 residues: Putative defensin-like protein 89 (89 aa).

Residues 1-25 (MGFKNNLSLVSVMVFALILLPMISG) form the signal peptide. 4 disulfides stabilise this stretch: C30–C66, C36–C57, C42–C64, and C46–C65.

It belongs to the DEFL family.

It localises to the secreted. This chain is Putative defensin-like protein 89, found in Arabidopsis thaliana (Mouse-ear cress).